The following is a 330-amino-acid chain: Ornithine carbamoyltransferase (330 aa).

Residues 57–60 (STRT), Gln-84, Arg-108, and 135–138 (HPTQ) contribute to the carbamoyl phosphate site. Residues Asn-168, Asp-232, and 236–237 (SM) contribute to the L-ornithine site. Carbamoyl phosphate-binding positions include 273-274 (CL) and Arg-318.

This sequence belongs to the aspartate/ornithine carbamoyltransferase superfamily. OTCase family.

It localises to the cytoplasm. The catalysed reaction is carbamoyl phosphate + L-ornithine = L-citrulline + phosphate + H(+). It participates in amino-acid biosynthesis; L-arginine biosynthesis; L-arginine from L-ornithine and carbamoyl phosphate: step 1/3. Functionally, reversibly catalyzes the transfer of the carbamoyl group from carbamoyl phosphate (CP) to the N(epsilon) atom of ornithine (ORN) to produce L-citrulline. This chain is Ornithine carbamoyltransferase, found in Alkaliphilus metalliredigens (strain QYMF).